Here is a 778-residue protein sequence, read N- to C-terminus: Exo-beta-D-glucosaminidase (778 aa).

Substrate contacts are provided by residues Y55, 104–105 (GE), 180–181 (DE), E308, E349, and Y381. E181 (proton donor) is an active-site residue. E349 serves as the catalytic Nucleophile.

This sequence belongs to the glycosyl hydrolase 35 family. In terms of assembly, homodimer.

The protein resides in the cytoplasm. It catalyses the reaction beta-D-glucosaminyl-(1-&gt;4)-N-acetyl-D-glucosamine + H2O = D-glucosamine + N-acetyl-D-glucosamine. Its pathway is glycan degradation; chitin degradation. Its function is as follows. Exo-type enzyme that specifically cleaves the non-reducing terminal glycosidic bond of chitooligosaccharides. Catalyzes the hydrolysis of GlcN-GlcNAc to glucosamine (GlcN) and N-acetylglucosamine (GlcNAc). Involved in chitin degradation. Can also hydrolyze chitosan and chitooligosaccharides of various chain lengths. In Pyrococcus horikoshii (strain ATCC 700860 / DSM 12428 / JCM 9974 / NBRC 100139 / OT-3), this protein is Exo-beta-D-glucosaminidase.